A 492-amino-acid polypeptide reads, in one-letter code: Bifunctional purine biosynthesis protein PurH (492 aa).

Positions M1 to V144 constitute an MGS-like domain.

Belongs to the PurH family.

It catalyses the reaction (6R)-10-formyltetrahydrofolate + 5-amino-1-(5-phospho-beta-D-ribosyl)imidazole-4-carboxamide = 5-formamido-1-(5-phospho-D-ribosyl)imidazole-4-carboxamide + (6S)-5,6,7,8-tetrahydrofolate. The catalysed reaction is IMP + H2O = 5-formamido-1-(5-phospho-D-ribosyl)imidazole-4-carboxamide. It functions in the pathway purine metabolism; IMP biosynthesis via de novo pathway; 5-formamido-1-(5-phospho-D-ribosyl)imidazole-4-carboxamide from 5-amino-1-(5-phospho-D-ribosyl)imidazole-4-carboxamide (10-formyl THF route): step 1/1. Its pathway is purine metabolism; IMP biosynthesis via de novo pathway; IMP from 5-formamido-1-(5-phospho-D-ribosyl)imidazole-4-carboxamide: step 1/1. This is Bifunctional purine biosynthesis protein PurH from Staphylococcus haemolyticus (strain JCSC1435).